Reading from the N-terminus, the 168-residue chain is Ribosome maturation factor RimM (168 aa).

Residues 95 to 168 (EEGYYWSDLI…RITVDWGLDY (74 aa)) enclose the PRC barrel domain.

The protein belongs to the RimM family. Binds ribosomal protein uS19.

Its subcellular location is the cytoplasm. Its function is as follows. An accessory protein needed during the final step in the assembly of 30S ribosomal subunit, possibly for assembly of the head region. Essential for efficient processing of 16S rRNA. May be needed both before and after RbfA during the maturation of 16S rRNA. It has affinity for free ribosomal 30S subunits but not for 70S ribosomes. The protein is Ribosome maturation factor RimM of Nitrosospira multiformis (strain ATCC 25196 / NCIMB 11849 / C 71).